Consider the following 471-residue polypeptide: Trimethyllysine dioxygenase (471 aa).

His251 and Asp253 together coordinate Fe cation. The tract at residues 272-302 is disordered; it reads KAAPSRPPPPPPPPPPPSEEKEAAGSAAGEA. The segment covering 276–288 has biased composition (pro residues); sequence SRPPPPPPPPPPP. Position 430 (His430) interacts with Fe cation.

This sequence belongs to the gamma-BBH/TMLD family. Fe(2+) is required as a cofactor. Requires L-ascorbate as cofactor.

It localises to the cytoplasm. It catalyses the reaction N(6),N(6),N(6)-trimethyl-L-lysine + 2-oxoglutarate + O2 = (3S)-3-hydroxy-N(6),N(6),N(6)-trimethyl-L-lysine + succinate + CO2. The protein operates within amine and polyamine biosynthesis; carnitine biosynthesis. In terms of biological role, converts trimethyllysine (TML) into hydroxytrimethyllysine (HTML). The sequence is that of Trimethyllysine dioxygenase (cbs-1) from Neurospora crassa (strain ATCC 24698 / 74-OR23-1A / CBS 708.71 / DSM 1257 / FGSC 987).